We begin with the raw amino-acid sequence, 471 residues long: UDP-N-acetylmuramate--L-alanine ligase (471 aa).

Position 122–128 (122–128 (GTHGKTT)) interacts with ATP.

This sequence belongs to the MurCDEF family.

Its subcellular location is the cytoplasm. The catalysed reaction is UDP-N-acetyl-alpha-D-muramate + L-alanine + ATP = UDP-N-acetyl-alpha-D-muramoyl-L-alanine + ADP + phosphate + H(+). It participates in cell wall biogenesis; peptidoglycan biosynthesis. In terms of biological role, cell wall formation. The polypeptide is UDP-N-acetylmuramate--L-alanine ligase (Cutibacterium acnes (strain DSM 16379 / KPA171202) (Propionibacterium acnes)).